A 103-amino-acid polypeptide reads, in one-letter code: Transcription factor S (103 aa).

Residues Cys-4, Cys-7, Cys-20, Cys-23, Cys-64, Cys-67, Cys-92, and Cys-95 each contribute to the Zn(2+) site. Residues 4–23 (CPKCKSLMIYQGDKLVCRKC) form a C4-type zinc finger. Residues 60 to 100 (TKAICPACGHNEAFWWLRQLRAADESEVRFFRCTKCGKTWR) form a TFIIS-type zinc finger.

This sequence belongs to the archaeal RpoM/eukaryotic RPA12/RPB9/RPC11 RNA polymerase family.

In terms of biological role, induces RNA cleavage activity in the RNA polymerase. In its presence, the cleavage activity of the RNA polymerase truncates the RNA back to position +15 in a stepwise manner by releasing mainly dinucleotides from the 3'-end of the nascent RNA. The truncated RNAs are able to continue elongation. Involved in transcriptional proofreading and fidelity. Misincorporation of nucleotides during elongation of transcription leads to arrested elongation complexes which are rescued by TFS-promoted removal of a dinucleotide from the 3'-end. TFS is able to induce a cleavage resynthesis cycle in stalled elongation complexes (resulting from the next missing nucleotide or a reduced incorporation rate of a wrong nucleotide) preventing misincorporation and enabling proofreading in a post-incorporation manner. Pausing of elongation complexes is the main determinant of TFS-induced RNA cleavage. In Archaeoglobus fulgidus (strain ATCC 49558 / DSM 4304 / JCM 9628 / NBRC 100126 / VC-16), this protein is Transcription factor S.